The chain runs to 367 residues: Quinolinate synthase (367 aa).

Residues H45 and S62 each contribute to the iminosuccinate site. C109 provides a ligand contact to [4Fe-4S] cluster. Iminosuccinate is bound by residues 140-142 (YVN) and S161. C229 provides a ligand contact to [4Fe-4S] cluster. Residues 255–257 (HPE) and T272 contribute to the iminosuccinate site. [4Fe-4S] cluster is bound at residue C319.

It belongs to the quinolinate synthase family. Type 3 subfamily. [4Fe-4S] cluster serves as cofactor.

The protein localises to the cytoplasm. It carries out the reaction iminosuccinate + dihydroxyacetone phosphate = quinolinate + phosphate + 2 H2O + H(+). It functions in the pathway cofactor biosynthesis; NAD(+) biosynthesis; quinolinate from iminoaspartate: step 1/1. Functionally, catalyzes the condensation of iminoaspartate with dihydroxyacetone phosphate to form quinolinate. In Geobacillus kaustophilus (strain HTA426), this protein is Quinolinate synthase.